The primary structure comprises 228 residues: Aquaporin Z (228 aa).

The next 5 helical transmembrane spans lie at 1–21, 46–66, 82–102, 129–149, and 154–174; these read MLNKLSAEFFGTFWLVFGGCG, TVLTMAYAVGGISGGHFNPAV, IPYWVAQVLGAIATAAILYVI, MMAGLLIEIILTAFFIIIILG, and LAPAGFAPIAIGFGLTLIHLV. Positions 63–65 match the NPA 1 motif; that stretch reads NPA. The NPA 2 signature appears at 184–186; that stretch reads NPA. Residues 205–225 form a helical membrane-spanning segment; that stretch reads LFWVAPLVGAVIGAIIWKGLL.

It belongs to the MIP/aquaporin (TC 1.A.8) family. As to quaternary structure, homotetramer.

The protein resides in the cell inner membrane. The enzyme catalyses H2O(in) = H2O(out). In terms of biological role, channel that permits osmotically driven movement of water in both directions. It is involved in the osmoregulation and in the maintenance of cell turgor during volume expansion in rapidly growing cells. It mediates rapid entry or exit of water in response to abrupt changes in osmolarity. The sequence is that of Aquaporin Z from Brucella suis biovar 1 (strain 1330).